The chain runs to 478 residues: Sorting nexin-4 (478 aa).

Basic and acidic residues predominate over residues methionine 1–aspartate 10. Residues methionine 1–glutamine 56 are disordered. Residues alanine 24–threonine 33 show a composition bias toward low complexity. The PX domain maps to valine 58–alanine 180. Residues arginine 101, threonine 103, lysine 127, and arginine 146 each coordinate a 1,2-diacyl-sn-glycero-3-phospho-(1D-myo-inositol-3-phosphate). A disordered region spans residues glutamate 459–aspartate 478.

This sequence belongs to the sorting nexin family. As to quaternary structure, interacts with the mitochondrial prohibitin complex subunits PHB1 and PHB2; the interaction is direct and plays a role in mitophagy.

It is found in the cytoplasm. Its subcellular location is the cytosol. The protein localises to the preautophagosomal structure membrane. It localises to the endosome membrane. The protein resides in the mitochondrion membrane. It is found in the lipid droplet. Functionally, sorting nexin, involved in the separation or division of vacuoles throughout the entire life cycle of the cells. Involved in retrieval of late-Golgi SNAREs from post-Golgi endosomes to the trans-Golgi network, for cytoplasm to vacuole transport (Cvt), and autophagy of large cargos including mitophagy, pexophagy and glycophagy. Required for the switch to necrotrophic growth. In Colletotrichum higginsianum (strain IMI 349063) (Crucifer anthracnose fungus), this protein is Sorting nexin-4.